A 616-amino-acid polypeptide reads, in one-letter code: Chaperone protein DnaK (616 aa).

A Phosphothreonine; by autocatalysis modification is found at Thr-174. Positions 575 to 616 are disordered; it reads QQTQGAQSDPGAAGFGGQQEAPGAGQDENVVDADYKVVDDDK. Basic and acidic residues predominate over residues 607–616; that stretch reads ADYKVVDDDK.

This sequence belongs to the heat shock protein 70 family.

In terms of biological role, acts as a chaperone. In Ruminiclostridium cellulolyticum (strain ATCC 35319 / DSM 5812 / JCM 6584 / H10) (Clostridium cellulolyticum), this protein is Chaperone protein DnaK.